Here is a 297-residue protein sequence, read N- to C-terminus: IMPACT family member C14C8.09c (297 aa).

Residues 225–255 (LRSELQEKNQKDKKKEVNKLEEKMTNAKEPN) are a coiled coil. Composition is skewed to basic and acidic residues over residues 228-250 (ELQE…KMTN) and 280-297 (SVDH…EKEE). A disordered region spans residues 228 to 297 (ELQEKNQKDK…KIIKDVEKEE (70 aa)).

The protein belongs to the IMPACT family.

The sequence is that of IMPACT family member C14C8.09c from Schizosaccharomyces pombe (strain 972 / ATCC 24843) (Fission yeast).